Here is a 430-residue protein sequence, read N- to C-terminus: DNA repair protein recA homolog 3, mitochondrial (430 aa).

The N-terminal 35 residues, 1 to 35 (MARILRNVYSLRSSLFSSELLRRSVVGTSFQLRGF), are a transit peptide targeting the mitochondrion. An ATP-binding site is contributed by 119–126 (GPEASGKT). The interval 385–415 (DEAADKETESESEEEDSLRVVVSPDNTDDES) is disordered.

It belongs to the RecA family.

The protein localises to the mitochondrion. Involved in recombination ability and DNA strand transfer activity. This is DNA repair protein recA homolog 3, mitochondrial from Arabidopsis thaliana (Mouse-ear cress).